We begin with the raw amino-acid sequence, 331 residues long: Phosphoenolpyruvate transferase (331 aa).

A 7,8-didemethyl-8-hydroxy-5-deazariboflavin-binding site is contributed by D63.

It belongs to the CofD family. As to quaternary structure, homodimer. Mg(2+) is required as a cofactor.

It carries out the reaction enolpyruvoyl-2-diphospho-5'-guanosine + 7,8-didemethyl-8-hydroxy-5-deazariboflavin = dehydro coenzyme F420-0 + GMP + H(+). It participates in cofactor biosynthesis; coenzyme F420 biosynthesis. Functionally, catalyzes the transfer of the phosphoenolpyruvate moiety from enoylpyruvoyl-2-diphospho-5'-guanosine (EPPG) to 7,8-didemethyl-8-hydroxy-5-deazariboflavin (FO) with the formation of dehydro coenzyme F420-0 and GMP. This chain is Phosphoenolpyruvate transferase, found in Mycobacterium sp. (strain JLS).